The sequence spans 933 residues: MAATPQSLFPSGDDLDSSQLQMEPDEVDTLKEGEDPADRMHPFLAIYHLQPLKLHPLVFAPGVPVIAQVVGTERYTSGSKVGTCTLYSVRLTHGDFTWTTKKKFRHFQELHRDLLRHKVFMSLLPLARFAVASSPAPEGDSREIPSLPRAGPEGSSRRTASKQKYLENYLNRLLTMSFYRNYHAMTEFLEVSQLSFIPDLGCKGLEGVIRKRSGGHRVPGLTCCGRDQVCYRWSKRWLVVKDSFLLYMCLETGAISFVQLFDPGFKVQVGKRSTEARYGVRVDTSHRSLILKCSSYRQARWWAQEITELAQGPGRDFIQLHRHDSYAPPRPGTLARWFVNGAGYFAAVADAILRAQEEIFITDWWLSPEIYLKRPAHSDDWRLDIMLKKKAEEGVHVSVLLFKEVELALAINSGYSKKALMLLHPNIKVMRHPDQVTLWAHHEKLLVVDQVVAFLGGLDLAYGRWDDLHYRLTDLGDSSESAAPQPPTSCSDLPATPDLTHNQLFWLGKDYSNLITKDWVQLDRPFDDFIDRETMPRMPWRDIGVVVHGSPARDLARHFIQRWNFTKTTKTKYKIPIYPYLLPKSTSTANQLPFTLSGGQCATVQVLRSVDRWSAGTLENSILNAYLHTIRESQHFLYIENQFFISCSDGRTVLNKVGDEIVDRILKAHKQGQCFRVYVLLPLLPGFEGDISTGGGNSIQAILHFTYRTLCRGEYSILHRLKAAMGTEWRNYISVCGLRTHGELGGHPVSELIYIHSKMLIADDRTVIIGSANINDRSLLGKRDSELAVLIEDTEMEPSLMNGVEYQAGRFALSLRKHCFSVILGAAARPHLDLRDPVCDAFFQLWQDTAESNANIYEQIFRCLPSNATRSLRALREYVVVEPLATVSPPLARSELNQVQGHLVHFPLKFLEDEYLLPSLGSKEGVMPLEVWT.

2 disordered regions span residues Met1–Leu20 and Ser134–Ala160. A PX domain is found at Val65–Ser195. Residues Lys203–Gln311 enclose the PH domain. 2 consecutive PLD phosphodiesterase domains span residues Thr437 to Arg464 and Glu751 to Ser778. Residues His441–Ala788 are catalytic.

This sequence belongs to the phospholipase D family. In terms of assembly, interacts with PIP5K1B. Interacts with EGFR. Phosphorylated by FGR.

The protein localises to the cell membrane. It catalyses the reaction a 1,2-diacyl-sn-glycero-3-phosphocholine + H2O = a 1,2-diacyl-sn-glycero-3-phosphate + choline + H(+). It carries out the reaction 1,2-dihexadecanoyl-sn-glycero-3-phosphocholine + H2O = 1,2-dihexadecanoyl-sn-glycero-3-phosphate + choline + H(+). In terms of biological role, function as phospholipase selective for phosphatidylcholine. May have a role in signal-induced cytoskeletal regulation and/or endocytosis. The sequence is that of Phospholipase D2 (PLD2) from Bos taurus (Bovine).